Here is a 61-residue protein sequence, read N- to C-terminus: UPF0434 protein Bpet2671 (61 aa).

It belongs to the UPF0434 family.

The chain is UPF0434 protein Bpet2671 from Bordetella petrii (strain ATCC BAA-461 / DSM 12804 / CCUG 43448).